The primary structure comprises 229 residues: MAKKGKKYQEAASKVDRTQHYSVEEAIKLAKETSIANFDASVEVAFRLGIDTRKNDQQIRGAVVLPNGTGKSQSVLVFAKGDKIAEAEAAGADYVGEAEYVQKIQQGWFDFDVVVATPDMMGEVGKLGRVLGPKGLMPNPKTGTVTMDVKKAVEEIKAGKVEYRAEKAGIVHASIGKVSFTDEQLIENFNTLQDVLAKAKPSSAKGTYFKSVAVTTTMGPGVKIDTASL.

This sequence belongs to the universal ribosomal protein uL1 family. In terms of assembly, part of the 50S ribosomal subunit.

Binds directly to 23S rRNA. The L1 stalk is quite mobile in the ribosome, and is involved in E site tRNA release. Its function is as follows. Protein L1 is also a translational repressor protein, it controls the translation of the L11 operon by binding to its mRNA. In Staphylococcus aureus (strain MRSA252), this protein is Large ribosomal subunit protein uL1.